Reading from the N-terminus, the 92-residue chain is Trp operon repressor homolog (92 aa).

The DNA-binding element occupies 56-79; it reads QREVASKLGVSITKITRGAANLQD.

The protein belongs to the TrpR family. Homodimer.

It localises to the cytoplasm. Functionally, this protein is an aporepressor. When complexed with L-tryptophan it binds the operator region of the trp operon and prevents the initiation of transcription. This Xylella fastidiosa (strain M23) protein is Trp operon repressor homolog.